The chain runs to 374 residues: Putative zinc metalloprotease R01501 (374 aa).

Residue H26 coordinates Zn(2+). E27 is an active-site residue. Position 30 (H30) interacts with Zn(2+). The next 4 helical transmembrane spans lie at 36–55, 112–134, 301–323, and 348–367; these read WSGI…LFGW, AATV…AVLF, VLNF…VPVL, and LAFR…AAWN. In terms of domain architecture, PDZ spans 126–199; the sequence is AIAIFAVLFS…LPITVRIERE (74 aa).

It belongs to the peptidase M50B family. Zn(2+) serves as cofactor.

Its subcellular location is the cell inner membrane. The polypeptide is Putative zinc metalloprotease R01501 (Rhizobium meliloti (strain 1021) (Ensifer meliloti)).